The sequence spans 410 residues: MEAFLEEAKASSRVLAGISGADKNRILKEMAQALRASTAEILKANALDMEDADRNDLTPALKDRLLLDESRVEGMAVAVEEIAALKEPVGRVLDGWVTEDGLKIEKVSVPIGVIGIIYESRPNVTSDTAALSFKSSNVCVLKGGKEAQHSNEAIAKVLRAVLKKNGLPEALISLIPDASREGVAKLIKMDKYVDLIVPRGGEGLIRYVSENASVPVVKHDKGQCHTYIDEDANVENAIRIAINAKVQRPGVCNAMETLLVDTAIAKEVLPLLKEAFDAAHTELKGCGETQEIIEVAPATEVDFDTEYLANILNIRVVDGVEGAIDHIVRYGSGHSEAIITENITTAEAFLNGIDAAVVYVNASTRFTDGGAFGFGAEVGISTNKLHARGPMGIEGLTTYKFKIYGSGQIR.

The protein belongs to the gamma-glutamyl phosphate reductase family.

The protein resides in the cytoplasm. The enzyme catalyses L-glutamate 5-semialdehyde + phosphate + NADP(+) = L-glutamyl 5-phosphate + NADPH + H(+). Its pathway is amino-acid biosynthesis; L-proline biosynthesis; L-glutamate 5-semialdehyde from L-glutamate: step 2/2. Catalyzes the NADPH-dependent reduction of L-glutamate 5-phosphate into L-glutamate 5-semialdehyde and phosphate. The product spontaneously undergoes cyclization to form 1-pyrroline-5-carboxylate. In Sulfurovum sp. (strain NBC37-1), this protein is Gamma-glutamyl phosphate reductase.